We begin with the raw amino-acid sequence, 113 residues long: C-X-C motif chemokine 6 (113 aa).

The first 36 residues, 1 to 36 (MSLLPSRAARVPGPSSSLCALLALLLLTPPGPLVSA), serve as a signal peptide directing secretion. Cystine bridges form between cysteine 48–cysteine 74 and cysteine 50–cysteine 90.

Belongs to the intercrine alpha (chemokine CxC) family.

The protein localises to the secreted. Chemotactic for neutrophil granulocytes. Signals through binding and activation of its receptors (CXCR1 and CXCR2). In addition to its chemotactic and angiogenic properties, it has strong antibacterial activity against Gram-positive and Gram-negative bacteria (90-fold-higher when compared to CXCL5 and CXCL7). In Equus caballus (Horse), this protein is C-X-C motif chemokine 6 (CXCL6).